The following is a 216-amino-acid chain: Peptide methionine sulfoxide reductase MsrA (216 aa).

Cys58 is an active-site residue.

Belongs to the MsrA Met sulfoxide reductase family.

The catalysed reaction is L-methionyl-[protein] + [thioredoxin]-disulfide + H2O = L-methionyl-(S)-S-oxide-[protein] + [thioredoxin]-dithiol. It catalyses the reaction [thioredoxin]-disulfide + L-methionine + H2O = L-methionine (S)-S-oxide + [thioredoxin]-dithiol. Has an important function as a repair enzyme for proteins that have been inactivated by oxidation. Catalyzes the reversible oxidation-reduction of methionine sulfoxide in proteins to methionine. The protein is Peptide methionine sulfoxide reductase MsrA of Azotobacter vinelandii (strain DJ / ATCC BAA-1303).